Reading from the N-terminus, the 142-residue chain is Putative pre-16S rRNA nuclease (142 aa).

The protein belongs to the YqgF nuclease family.

It localises to the cytoplasm. Could be a nuclease involved in processing of the 5'-end of pre-16S rRNA. This is Putative pre-16S rRNA nuclease from Lactobacillus acidophilus (strain ATCC 700396 / NCK56 / N2 / NCFM).